A 796-amino-acid polypeptide reads, in one-letter code: Transcription factor kayak (796 aa).

4 disordered regions span residues 109–132, 315–341, 374–429, and 442–490; these read AYQQ…SNTS, VVNN…SNTV, FNCG…GSNG, and VGSA…RNKL. Over residues 402 to 429 the composition is skewed to low complexity; the sequence is TTDTSSAATDSTSYQNGGHMFGNNGSNG. Residues 447–457 show a composition bias toward polar residues; it reads RGTSSTSNNAT. One can recognise a bZIP domain in the interval 478 to 541; that stretch reads EEKRRVRRER…HQLNFVLEAH (64 aa). Residues 480–499 form a basic motif region; it reads KRRVRRERNKLAAARCRKRR. The segment at 506-534 is leucine-zipper; sequence LSEEVDGLLKKNEDLKKEIEILTNTRHQL. The segment at 569-601 is disordered; the sequence is SSGSNGSHHHNSNSNNSNNNNSNNNNNSNSNDS. Residue S621 is modified to Phosphoserine. 2 disordered regions span residues 642 to 661 and 774 to 796; these read PHDA…PPAA and SSQN…LVSL.

Belongs to the bZIP family. Fos subfamily. In terms of assembly, homodimer. Heterodimer with Jra. The kay-Jra heterodimer binds more stably to the AP-1 site than either of the two proteins alone.

Its subcellular location is the nucleus. Its function is as follows. Developmentally regulated transcription factor AP-1 binds and recognizes the enhancer DNA sequence: 5'-TGA[CG]TCA-3'. May play a role in the function or determination of a particular subset of cells in the developing embryo. It is able to carry out its function either independently of or in conjunction with Jra. The chain is Transcription factor kayak from Drosophila grimshawi (Hawaiian fruit fly).